Here is a 131-residue protein sequence, read N- to C-terminus: Phosphoribosyl-ATP pyrophosphatase 2 (131 aa).

The interval 105 to 131 (RIGKPAAPHATRRPVIPQEARAVRKHR) is disordered.

The protein belongs to the PRA-PH family.

It localises to the cytoplasm. The enzyme catalyses 1-(5-phospho-beta-D-ribosyl)-ATP + H2O = 1-(5-phospho-beta-D-ribosyl)-5'-AMP + diphosphate + H(+). It participates in amino-acid biosynthesis; L-histidine biosynthesis; L-histidine from 5-phospho-alpha-D-ribose 1-diphosphate: step 2/9. This is Phosphoribosyl-ATP pyrophosphatase 2 (hisE2) from Rhodopseudomonas palustris (strain ATCC BAA-98 / CGA009).